Here is a 200-residue protein sequence, read N- to C-terminus: Dephospho-CoA kinase (200 aa).

The DPCK domain maps to 4-200; the sequence is TIGLTGSVAT…TFIKRFVKNK (197 aa). An ATP-binding site is contributed by 12–17; that stretch reads ATGKST.

It belongs to the CoaE family.

The protein localises to the cytoplasm. The enzyme catalyses 3'-dephospho-CoA + ATP = ADP + CoA + H(+). It functions in the pathway cofactor biosynthesis; coenzyme A biosynthesis; CoA from (R)-pantothenate: step 5/5. Its function is as follows. Catalyzes the phosphorylation of the 3'-hydroxyl group of dephosphocoenzyme A to form coenzyme A. This Listeria monocytogenes serotype 4b (strain F2365) protein is Dephospho-CoA kinase.